A 458-amino-acid chain; its full sequence is tRNA-2-methylthio-N(6)-dimethylallyladenosine synthase (458 aa).

One can recognise an MTTase N-terminal domain in the interval 3–120 (QKLYIETFGC…LPSMLEQVRC (118 aa)). [4Fe-4S] cluster contacts are provided by Cys12, Cys49, Cys83, Cys157, Cys161, and Cys164. The Radical SAM core domain maps to 143–375 (RADGPKAFVS…QAKIADNAAK (233 aa)). The TRAM domain maps to 378-441 (ASMVGSIQSV…PNSLRGRLIG (64 aa)).

The protein belongs to the methylthiotransferase family. MiaB subfamily. As to quaternary structure, monomer. It depends on [4Fe-4S] cluster as a cofactor.

Its subcellular location is the cytoplasm. The catalysed reaction is N(6)-dimethylallyladenosine(37) in tRNA + (sulfur carrier)-SH + AH2 + 2 S-adenosyl-L-methionine = 2-methylsulfanyl-N(6)-dimethylallyladenosine(37) in tRNA + (sulfur carrier)-H + 5'-deoxyadenosine + L-methionine + A + S-adenosyl-L-homocysteine + 2 H(+). Its function is as follows. Catalyzes the methylthiolation of N6-(dimethylallyl)adenosine (i(6)A), leading to the formation of 2-methylthio-N6-(dimethylallyl)adenosine (ms(2)i(6)A) at position 37 in tRNAs that read codons beginning with uridine. This is tRNA-2-methylthio-N(6)-dimethylallyladenosine synthase from Methylococcus capsulatus (strain ATCC 33009 / NCIMB 11132 / Bath).